Here is a 553-residue protein sequence, read N- to C-terminus: MRKIQAKKGLSIECKGWEQEAVLRMLYNNLDPEVAERPEDLVVYGGIGKAARNWEAFEAIEKTLRELESDETMLVQSGKPVAVFKTHEEAPRVLISNSVLVPEWANWDHFNELDKKGLIMYGQMTAGSWIYIGSQGIVQGTYETFAELGNQHFNGDLAGTVTLTAGLGGMGGAQPLAITMNHGVAICVDVDETRVDKRIDTKYCDVKTADLDEALKLAEEAKERGEGLSIGLVGNAVDIHQAILEKGFKIDIITDQTSAHDPLNGYVPQGYSVEEAKVLREKDPKKYVELSQASMAKHVELMLEFQKRGAVAFDYGNNIRQVAFNNGVKNAFDFPGFVPAYIRPLFCEGKGQFRFAALSGDPKDIERADEEMRKLFPENEKLLRWLDLAEEKISYQGLPSRIAWLGYGERAKMGLALNRLVRDGEISAPIVIGRDHLDAGSVASPNRETESMKDGSDAVGDWAVLNALINTAAGGSWISFHHGGGVGMGYSLHAGMVVVADGSERAERRLERVLTTDPGMGVARHVDAGYDIAIQTAKEKGIHIPMIDKAGDK.

NAD(+) is bound by residues 45-46 (GG), Gln-123, 169-171 (GMG), Asp-189, Arg-194, 235-236 (NA), 256-260 (QTSAH), 266-267 (YV), Tyr-315, and Gly-485.

Belongs to the urocanase family. NAD(+) is required as a cofactor.

The protein localises to the cytoplasm. The enzyme catalyses 4-imidazolone-5-propanoate = trans-urocanate + H2O. Its pathway is amino-acid degradation; L-histidine degradation into L-glutamate; N-formimidoyl-L-glutamate from L-histidine: step 2/3. Its function is as follows. Catalyzes the conversion of urocanate to 4-imidazolone-5-propionate. The protein is Urocanate hydratase of Staphylococcus aureus (strain Mu50 / ATCC 700699).